The primary structure comprises 149 residues: uncharacterized protein (149 aa).

The segment at 1 to 103 (MFGLKVKNAE…SPTQGSRLRH (103 aa)) is disordered. Residues 7–18 (KNAEADTAKSNE) are compositionally biased toward basic and acidic residues. The segment covering 26–41 (TGSSTTSGSGQSTQRG) has biased composition (low complexity). The segment covering 61–72 (GSQGNSGDQGTE) has biased composition (polar residues).

It belongs to the adhesin P1 family.

This is an uncharacterized protein from Mycoplasma pneumoniae (strain ATCC 29342 / M129 / Subtype 1) (Mycoplasmoides pneumoniae).